An 88-amino-acid polypeptide reads, in one-letter code: ATP synthase epsilon chain (88 aa).

It belongs to the ATPase epsilon chain family. In terms of assembly, F-type ATPases have 2 components, CF(1) - the catalytic core - and CF(0) - the membrane proton channel. CF(1) has five subunits: alpha(3), beta(3), gamma(1), delta(1), epsilon(1). CF(0) has three main subunits: a, b and c.

The protein resides in the cell inner membrane. In terms of biological role, produces ATP from ADP in the presence of a proton gradient across the membrane. The protein is ATP synthase epsilon chain (atpC) of Chlorobium limicola.